The following is a 273-amino-acid chain: Large ribosomal subunit protein uL2cz/uL2cy (273 aa).

2 disordered regions span residues 1 to 25 (MAKH…VKSN) and 225 to 253 (PVDH…YPAL).

Belongs to the universal ribosomal protein uL2 family. In terms of assembly, part of the 50S ribosomal subunit.

The protein localises to the plastid. The protein resides in the chloroplast. In Triticum aestivum (Wheat), this protein is Large ribosomal subunit protein uL2cz/uL2cy (rpl2-A).